Reading from the N-terminus, the 223-residue chain is Deoxyribose-phosphate aldolase (223 aa).

Aspartate 92 serves as the catalytic Proton donor/acceptor. Lysine 158 serves as the catalytic Schiff-base intermediate with acetaldehyde. The Proton donor/acceptor role is filled by lysine 188.

The protein belongs to the DeoC/FbaB aldolase family. DeoC type 1 subfamily.

It is found in the cytoplasm. It carries out the reaction 2-deoxy-D-ribose 5-phosphate = D-glyceraldehyde 3-phosphate + acetaldehyde. It participates in carbohydrate degradation; 2-deoxy-D-ribose 1-phosphate degradation; D-glyceraldehyde 3-phosphate and acetaldehyde from 2-deoxy-alpha-D-ribose 1-phosphate: step 2/2. In terms of biological role, catalyzes a reversible aldol reaction between acetaldehyde and D-glyceraldehyde 3-phosphate to generate 2-deoxy-D-ribose 5-phosphate. The sequence is that of Deoxyribose-phosphate aldolase from Mycolicibacterium paratuberculosis (strain ATCC BAA-968 / K-10) (Mycobacterium paratuberculosis).